The sequence spans 89 residues: Small ribosomal subunit protein uS15 (89 aa).

Belongs to the universal ribosomal protein uS15 family. In terms of assembly, part of the 30S ribosomal subunit. Forms a bridge to the 50S subunit in the 70S ribosome, contacting the 23S rRNA.

Functionally, one of the primary rRNA binding proteins, it binds directly to 16S rRNA where it helps nucleate assembly of the platform of the 30S subunit by binding and bridging several RNA helices of the 16S rRNA. Forms an intersubunit bridge (bridge B4) with the 23S rRNA of the 50S subunit in the ribosome. In Parvibaculum lavamentivorans (strain DS-1 / DSM 13023 / NCIMB 13966), this protein is Small ribosomal subunit protein uS15.